Reading from the N-terminus, the 463-residue chain is Toxin CaTX-A (463 aa).

The first 18 residues, 1–18 (MSRGYSLHLVLFLVLSTA), serve as a signal peptide directing secretion.

It belongs to the jellyfish toxin family. Type II subfamily. As to quaternary structure, oligomer. In terms of processing, contains disulfide bonds. It is suggested that CaTX-B is synthesized in the tentacle, is modified (become CaTX-A) and then migrates to the nematocyst.

The protein resides in the secreted. It is found in the nematocyst. It localises to the target cell membrane. Functionally, has potent hemolytic activity. Is lethal to crayfish. Causes cutaneous inflammation in humans. May act as a pore-forming toxin, disrupting normal transmembrane ion concentration gradients in susceptible cells. The sequence is that of Toxin CaTX-A from Carybdea alata (Hawaiian box jellyfish).